The sequence spans 763 residues: Putative pentatricopeptide repeat-containing protein At1g74580 (763 aa).

PPR repeat units follow at residues 39-69, 75-109, 110-144, 145-179, 180-214, 215-249, 250-284, 285-319, 320-354, 355-389, 390-424, 425-459, 460-494, 495-529, 530-564, 565-595, 601-635, 636-670, and 671-705; these read TLST…MREN, LEGV…DCEP, TVFS…GITP, DVYS…GCEM, NVVA…GVSL, CLST…GVLP, NLFT…GPKP, DVIT…GLEP, DSYT…GFVP, DQFT…GIKP, NVIL…GLIP, EVQT…GYFP, DIFT…GVDP, DVYT…GCAP, NLFT…SVNP, DAVT…MEEA, STPT…CLGP, DGYT…GFIP, and SLTT…GLVP.

Belongs to the PPR family. P subfamily.

The sequence is that of Putative pentatricopeptide repeat-containing protein At1g74580 from Arabidopsis thaliana (Mouse-ear cress).